A 507-amino-acid polypeptide reads, in one-letter code: MITLTPGHLTLPQLRRIAREPVQLKLDPASFAKIDAGAKAVADIAAKGEPAYGINTGFGRLASTHIPHDQLELLQKNLVLSHAVGVGEPMARSSVRLLMALKLSSLGRGHSGIRREVMDALITLFNADVLPLIPVKGSVGASGDLAPLAHMSAVLLGVGEVFIRGERASALDGLRVAGLAPLTLQAKEGLALLNGTQASTALALDNMFAIEDLYRTALVAGALSVDAAAGSVKPFDARIHELRGHQGQIDAAASYRELLEGSPINQSHRDCDKVQDPYSLRCQPQVMGACLDQMRHAADVLLVEANAVSDNPLIFPDTGEVLSGGNFHAEPVAFAADNLALAAAEIGALAERRIALLIDATLSGLPPFLVKDGGVNSGFMIAHVTAAALASENKTLAHPASVDSLPTSANQEDHVSMATFAARKLADIADNTKHILAIELLAAAQGVDLRAPYHTSPKLAPVMETIRGKVAHYELDHYFAPDIAVIAKLVGERAFAKVAPFSFASEQ.

Positions 141-143 (ASG) form a cross-link, 5-imidazolinone (Ala-Gly). S142 carries the 2,3-didehydroalanine (Ser) modification.

It belongs to the PAL/histidase family. Post-translationally, contains an active site 4-methylidene-imidazol-5-one (MIO), which is formed autocatalytically by cyclization and dehydration of residues Ala-Ser-Gly.

The protein localises to the cytoplasm. The enzyme catalyses L-histidine = trans-urocanate + NH4(+). The protein operates within amino-acid degradation; L-histidine degradation into L-glutamate; N-formimidoyl-L-glutamate from L-histidine: step 1/3. The chain is Histidine ammonia-lyase from Burkholderia orbicola (strain MC0-3).